The primary structure comprises 704 residues: Translational regulator orb2 (704 aa).

The segment at 1 to 64 (MDSLKLPKAN…PPGLGSSTPI (64 aa)) is disordered. Residues 1-87 (MDSLKLPKAN…ILQSFHHSKH (87 aa)) form a gln/His-rich region. The segment covering 9–42 (ANSATSSASGSNSNLSGSTSASASAATSPTSSGT) has biased composition (low complexity). Serine 74, serine 88, and serine 100 each carry phosphoserine. 3 disordered regions span residues 82–106 (FHHS…SNLL), 166–266 (LPNL…GVSP), and 417–438 (SPSR…GGNV). A gln/His-rich region spans residues 163-240 (CGGLPNLNLN…PSSPGGGGGG (78 aa)). Low complexity-rich tracts occupy residues 176-205 (QLHQ…QQQL), 218-233 (QQQQ…SPSS), and 417-429 (SPSR…PHSP). 2 positions are modified to phosphoserine: serine 425 and serine 428. RRM domains follow at residues 447 to 538 (RKVF…PWRL) and 555 to 637 (KTVF…PYVL).

As to quaternary structure, monomer. Upon neuronal stimulation, forms stable amyloid-like oligomers composed of isoform A and isoform B which are required for formation of persistent long-term memory. Isoform A is critical for oligomer formation. Phe-5 of isoform A is required for amyloid-like oligomerization. Rapidly forms amyloids and toxic intermediates are extremely transient. Unlike in the adult nervous system, remains monomeric in the early embryo. Interacts with the translational regulator bol. Interacts with Tob; the interaction is enhanced by neuronal stimulation, stabilizes isoform A and induces oligomerization. In terms of processing, phosphorylation regulates interaction with Tob and oligomerization. Protein phosphatase 2A keeps both Orb2 and Tob in an unphosphorylated form. Following synaptic activation, unphosphorylated Orb2 is bound and stabilized by unphosphorylated Tob. Tob recruits activated LimK which phosphorylates both Orb2 and Tob and enhances Orb2 oligomerization. Broadly expressed throughout the nervous system of embryo, larva and adult including the ventral nerve cord and brain (at protein level). In early embryos, deposited maternally and distributed uniformly throughout the embryo until the extended germband stage. By mid-embryogenesis, highest levels are found in the central and peripheral nervous systems with lower expression also detected in the ectoderm and mesoderm. In adults, high levels are present in the head and body of both sexes with higher expression in testis than ovary. In the ovary, expressed in both germ and follicle cells. In adult head, predominantly neuronal with broad expression throughout the brain and ventral ganglia including the mushroom body.

It localises to the perikaryon. The protein localises to the cell projection. Its subcellular location is the axon. It is found in the dendrite. The protein resides in the synapse. It localises to the cytoplasm. The protein localises to the perinuclear region. In terms of biological role, RNA-binding protein involved in translational regulation and required for long-term memory. Required in mushroom body gamma neurons for long-term memory in male courtship. Binds to mRNA 3'-UTRs. In its monomeric form, acts as a translational repressor of genes involved in neuronal growth, synapse formation and protein turnover. In its amyloid-like oligomeric form, acts as a translational activator. The monomeric form reduces poly(A) tail length and destabilizes mRNA while the oligomeric form protects and elongates the poly(A) tail and stabilizes mRNA. Involved in asymmetric cell division in the central nervous system. Plays a role in synapse formation and morphology at neuromuscular junctions by modulating the translation of the tumor suppressor brat. Required for the progression of spermatogenesis through meiosis and for sperm differentiation. During sperm differentiation, required to asymmetrically localize and activate the translation of protein kinase aPKC mRNAs which is necessary for spermatid cyst polarization. Also required during spermatid cyst polarization for localization and translation of its own mRNA. Its function is as follows. Required for initial memory acquisition. Following subsequent late dopaminergic pathway activation, recruits isoform B into a complex to activate translation of CaMKII which is required for long-term memory consolidation. In Drosophila melanogaster (Fruit fly), this protein is Translational regulator orb2.